The primary structure comprises 137 residues: Putative pre-16S rRNA nuclease (137 aa).

This sequence belongs to the YqgF nuclease family.

It is found in the cytoplasm. Its function is as follows. Could be a nuclease involved in processing of the 5'-end of pre-16S rRNA. This is Putative pre-16S rRNA nuclease from Buchnera aphidicola subsp. Schizaphis graminum (strain Sg).